Consider the following 571-residue polypeptide: Glutamate--tRNA ligase (571 aa).

The short motif at 110–120 (PNPNGPGTLGS) is the 'HIGH' region element.

Belongs to the class-I aminoacyl-tRNA synthetase family. Glutamate--tRNA ligase type 2 subfamily.

The protein localises to the cytoplasm. It catalyses the reaction tRNA(Glu) + L-glutamate + ATP = L-glutamyl-tRNA(Glu) + AMP + diphosphate. Catalyzes the attachment of glutamate to tRNA(Glu) in a two-step reaction: glutamate is first activated by ATP to form Glu-AMP and then transferred to the acceptor end of tRNA(Glu). This Methanosarcina acetivorans (strain ATCC 35395 / DSM 2834 / JCM 12185 / C2A) protein is Glutamate--tRNA ligase.